Here is a 337-residue protein sequence, read N- to C-terminus: tRNA dimethylallyltransferase (337 aa).

24–31 (GPTGAGKT) contacts ATP. Residue 26–31 (TGAGKT) coordinates substrate. Interaction with substrate tRNA regions lie at residues 49 to 52 (DSRQ) and 188 to 192 (QRAVR).

Belongs to the IPP transferase family. Monomer. Mg(2+) serves as cofactor.

It catalyses the reaction adenosine(37) in tRNA + dimethylallyl diphosphate = N(6)-dimethylallyladenosine(37) in tRNA + diphosphate. Its function is as follows. Catalyzes the transfer of a dimethylallyl group onto the adenine at position 37 in tRNAs that read codons beginning with uridine, leading to the formation of N6-(dimethylallyl)adenosine (i(6)A). The polypeptide is tRNA dimethylallyltransferase (Nitratidesulfovibrio vulgaris (strain DSM 19637 / Miyazaki F) (Desulfovibrio vulgaris)).